The chain runs to 194 residues: dCTP deaminase, dUMP-forming (194 aa).

Residues 105-110, Asp123, 131-133, Gln152, Tyr166, Lys174, and Gln178 contribute to the dCTP site; these read RSSMGR and TLE. Catalysis depends on Glu133, which acts as the Proton donor/acceptor.

It belongs to the dCTP deaminase family. As to quaternary structure, homotrimer.

The enzyme catalyses dCTP + 2 H2O = dUMP + NH4(+) + diphosphate. It participates in pyrimidine metabolism; dUMP biosynthesis; dUMP from dCTP: step 1/1. Its function is as follows. Bifunctional enzyme that catalyzes both the deamination of dCTP to dUTP and the hydrolysis of dUTP to dUMP without releasing the toxic dUTP intermediate. The protein is dCTP deaminase, dUMP-forming of Methanobrevibacter smithii (strain ATCC 35061 / DSM 861 / OCM 144 / PS).